A 141-amino-acid chain; its full sequence is Nucleoside diphosphate kinase (141 aa).

ATP is bound by residues K11, F59, R87, T93, R104, and N114. The active-site Pros-phosphohistidine intermediate is H117.

The protein belongs to the NDK family. Homotetramer. It depends on Mg(2+) as a cofactor.

It is found in the cytoplasm. The enzyme catalyses a 2'-deoxyribonucleoside 5'-diphosphate + ATP = a 2'-deoxyribonucleoside 5'-triphosphate + ADP. It catalyses the reaction a ribonucleoside 5'-diphosphate + ATP = a ribonucleoside 5'-triphosphate + ADP. Its function is as follows. Major role in the synthesis of nucleoside triphosphates other than ATP. The ATP gamma phosphate is transferred to the NDP beta phosphate via a ping-pong mechanism, using a phosphorylated active-site intermediate. The chain is Nucleoside diphosphate kinase from Legionella pneumophila (strain Paris).